The primary structure comprises 250 residues: Transmembrane protein 106C (250 aa).

Positions 1 to 25 (MGSQHSAAARPSSCRRKQEDDRDGL) are disordered. Glycine 2 is lipidated: N-myristoyl glycine. The segment covering 16–25 (RKQEDDRDGL) has biased composition (basic and acidic residues). Residues 87-107 (YVLLSILLCLLASGLVVFFLF) traverse the membrane as a helical segment. 2 N-linked (GlcNAc...) asparagine glycosylation sites follow: asparagine 173 and asparagine 186. A helical membrane pass occupies residues 197–217 (FSYVYFFCTVPEILVHNIVIF).

This sequence belongs to the TMEM106 family. In terms of assembly, interacts with TMEM106B.

The protein resides in the endoplasmic reticulum membrane. It localises to the membrane. This is Transmembrane protein 106C (TMEM106C) from Homo sapiens (Human).